Consider the following 467-residue polypeptide: UDP-N-acetylmuramate--L-alanine ligase (467 aa).

Gly-121–Thr-127 contacts ATP.

This sequence belongs to the MurCDEF family.

It is found in the cytoplasm. The enzyme catalyses UDP-N-acetyl-alpha-D-muramate + L-alanine + ATP = UDP-N-acetyl-alpha-D-muramoyl-L-alanine + ADP + phosphate + H(+). It functions in the pathway cell wall biogenesis; peptidoglycan biosynthesis. In terms of biological role, cell wall formation. The protein is UDP-N-acetylmuramate--L-alanine ligase of Parasynechococcus marenigrum (strain WH8102).